Reading from the N-terminus, the 258-residue chain is Ribosomal RNA small subunit methyltransferase J (258 aa).

S-adenosyl-L-methionine is bound by residues 123–124 (ER) and Asp-177. Residues 232–258 (IDGPKPSHSLEGKSSRYDIYPKKALKA) form a disordered region. The segment covering 239 to 252 (HSLEGKSSRYDIYP) has biased composition (basic and acidic residues).

Belongs to the methyltransferase superfamily. RsmJ family.

Its subcellular location is the cytoplasm. It carries out the reaction guanosine(1516) in 16S rRNA + S-adenosyl-L-methionine = N(2)-methylguanosine(1516) in 16S rRNA + S-adenosyl-L-homocysteine + H(+). Its function is as follows. Specifically methylates the guanosine in position 1516 of 16S rRNA. The polypeptide is Ribosomal RNA small subunit methyltransferase J (Pseudomonas putida (strain ATCC 47054 / DSM 6125 / CFBP 8728 / NCIMB 11950 / KT2440)).